A 189-amino-acid chain; its full sequence is Peptidyl-tRNA hydrolase (189 aa).

Tyr-15 is a tRNA binding site. Catalysis depends on His-20, which acts as the Proton acceptor. Residues Phe-66, Asn-68, and Asn-114 each coordinate tRNA.

Belongs to the PTH family. Monomer.

It localises to the cytoplasm. The catalysed reaction is an N-acyl-L-alpha-aminoacyl-tRNA + H2O = an N-acyl-L-amino acid + a tRNA + H(+). In terms of biological role, hydrolyzes ribosome-free peptidyl-tRNAs (with 1 or more amino acids incorporated), which drop off the ribosome during protein synthesis, or as a result of ribosome stalling. Catalyzes the release of premature peptidyl moieties from peptidyl-tRNA molecules trapped in stalled 50S ribosomal subunits, and thus maintains levels of free tRNAs and 50S ribosomes. This Streptococcus equi subsp. zooepidemicus (strain MGCS10565) protein is Peptidyl-tRNA hydrolase.